The following is a 142-amino-acid chain: Transmembrane protein 170A (142 aa).

Topologically, residues 1–48 are lumenal; the sequence is MEGGGGGLGGEPGLLQQILSLRLVPRVGNVTDCQRATLCSFPEMWYGV. Asparagine 29 carries N-linked (GlcNAc...) asparagine glycosylation. The helical transmembrane segment at 49–69 threads the bilayer; sequence FLWALVSSLFFHIPAGLLALF. Residues 70-78 lie on the Cytoplasmic side of the membrane; the sequence is TLRHHKYGR. The chain crosses the membrane as a helical span at residues 79-99; it reads FMSVGIFLMGVLGPISAGILT. Residues 100–114 lie on the Lumenal side of the membrane; the sequence is SAAIAGVYKAAGKEM. Residues 115–135 traverse the membrane as a helical segment; it reads IPFEALVLGVGQTFCVLIVSF. Topologically, residues 136 to 142 are cytoplasmic; that stretch reads LRILATL.

This sequence belongs to the TMEM170 family.

It is found in the endoplasmic reticulum membrane. The protein resides in the nucleus envelope. Functionally, may regulate membrane morphogenesis in the endoplasmic reticulum (ER) by promoting ER sheet formation at the expense of ER tubules. This Xenopus laevis (African clawed frog) protein is Transmembrane protein 170A (tmem170a).